Reading from the N-terminus, the 240-residue chain is tRNA1(Val) (adenine(37)-N6)-methyltransferase (240 aa).

This sequence belongs to the methyltransferase superfamily. tRNA (adenine-N(6)-)-methyltransferase family.

It is found in the cytoplasm. It catalyses the reaction adenosine(37) in tRNA1(Val) + S-adenosyl-L-methionine = N(6)-methyladenosine(37) in tRNA1(Val) + S-adenosyl-L-homocysteine + H(+). Functionally, specifically methylates the adenine in position 37 of tRNA(1)(Val) (anticodon cmo5UAC). This chain is tRNA1(Val) (adenine(37)-N6)-methyltransferase, found in Vibrio cholerae serotype O1 (strain ATCC 39315 / El Tor Inaba N16961).